Here is a 466-residue protein sequence, read N- to C-terminus: Vimentin (466 aa).

2 stretches are compositionally biased toward low complexity: residues 1 to 13 (MSTRSVSSSSYRR) and 20 to 33 (TSSRPSSNRSYVTT). The disordered stretch occupies residues 1–33 (MSTRSVSSSSYRRMFGGSGTSSRPSSNRSYVTT). An N-acetylserine modification is found at serine 2. The head stretch occupies residues 2-95 (STRSVSSSSY…FSLADAINTE (94 aa)). Serine 5 bears the Phosphoserine mark. Residue serine 7 is modified to Phosphoserine; by PKA and PKC; alternate. O-linked (GlcNAc) serine; alternate glycosylation occurs at serine 7. Serine 8 carries the post-translational modification Phosphoserine. Serine 9 and serine 10 each carry phosphoserine; by PKC. Threonine 20 is subject to Phosphothreonine. Phosphoserine is present on residues serine 25 and serine 26. O-linked (GlcNAc) threonine glycosylation occurs at threonine 33. Residue serine 34 is glycosylated (O-linked (GlcNAc) serine; alternate). Serine 34 is subject to Phosphoserine; by PKC; alternate. Serine 39 is modified (phosphoserine; by CaMK2, PKA, PKC and ROCK2). Serine 42 is subject to Phosphoserine; by PKC. At serine 47 the chain carries Phosphoserine; by PKA. Serine 49 and serine 51 each carry phosphoserine. A Phosphotyrosine modification is found at tyrosine 53. Phosphoserine occurs at positions 55 and 56. Tyrosine 61 is subject to Phosphotyrosine. The residue at position 66 (serine 66) is a Phosphoserine; by PKA and PKC. At serine 72 the chain carries Phosphoserine; by AURKB and ROCK2. Serine 73, serine 83, and serine 87 each carry phosphoserine. The interval 96–131 (FKNTRTNEKVELQELNDRFANYIDKVRFLEQQNKIL) is coil 1A. Residues 96–131 (FKNTRTNEKVELQELNDRFANYIDKVRFLEQQNKIL) are a coiled coil. An IF rod domain is found at 103–411 (EKVELQELND…KLLEGEESRI (309 aa)). Lysine 104 participates in a covalent cross-link: Glycyl lysine isopeptide (Lys-Gly) (interchain with G-Cter in SUMO2). Residue tyrosine 117 is modified to Phosphotyrosine. Residues lysine 120, lysine 129, and lysine 139 each carry the N6-acetyllysine; alternate modification. An N6-succinyllysine; alternate mark is found at lysine 120 and lysine 129. Glycyl lysine isopeptide (Lys-Gly) (interchain with G-Cter in SUMO2); alternate cross-links involve residues lysine 120, lysine 129, and lysine 139. Positions 132–153 (LAELEQLKGQGKSRLGDLYEEE) are linker 1. A Phosphoserine modification is found at serine 144. The stretch at 154 to 245 (MRELRRQVDQ…KLHDEEIQEL (92 aa)) forms a coiled coil. The coil 1B stretch occupies residues 154 to 245 (MRELRRQVDQ…KLHDEEIQEL (92 aa)). Position 168 is an N6-acetyllysine (lysine 168). Residue lysine 188 is modified to N6-acetyllysine; alternate. An N6-succinyllysine; alternate modification is found at lysine 188. At serine 214 the chain carries Phosphoserine. At lysine 223 the chain carries N6-acetyllysine; alternate. A Glycyl lysine isopeptide (Lys-Gly) (interchain with G-Cter in SUMO2); alternate cross-link involves residue lysine 223. Serine 226 is modified (phosphoserine). An N6-acetyllysine modification is found at lysine 235. Residues 246-268 (QAQIQEQHVQIDVDVSKPDLTAA) form a linker 12 region. Residue lysine 262 forms a Glycyl lysine isopeptide (Lys-Gly) (interchain with G-Cter in SUMO2) linkage. Positions 269-407 (LRDVRQQYES…ATYRKLLEGE (139 aa)) are coil 2. N6-acetyllysine; alternate is present on lysine 294. The residue at position 294 (lysine 294) is an N6-succinyllysine; alternate. A Glycyl lysine isopeptide (Lys-Gly) (interchain with G-Cter in SUMO2); alternate cross-link involves residue lysine 294. Residue serine 299 is modified to Phosphoserine. A coiled-coil region spans residues 303-407 (NRNNDALRQA…ATYRKLLEGE (105 aa)). Lysine 313 is covalently cross-linked (Glycyl lysine isopeptide (Lys-Gly) (interchain with G-Cter in SUMO2)). Phosphoserine is present on serine 325. The [IL]-x-C-x-x-[DE] motif motif lies at 326 to 329 (LTCE). Lysine 373 bears the N6-acetyllysine; alternate mark. A Glycyl lysine isopeptide (Lys-Gly) (interchain with G-Cter in SUMO2); alternate cross-link involves residue lysine 373. The tail stretch occupies residues 408–466 (ESRISLPLPNFSSLNLRETNLESLPLVDTHSKRTLLIKTVETRDGQVINETSQHHDDLE). Residues serine 409, serine 412, serine 419, and serine 420 each carry the phosphoserine modification. Threonine 426 is subject to Phosphothreonine. A Phosphoserine modification is found at serine 430. A Phosphothreonine modification is found at threonine 436. Position 438 is a phosphoserine (serine 438). Lysine 439 is covalently cross-linked (Glycyl lysine isopeptide (Lys-Gly) (interchain with G-Cter in SUMO2)). N6-acetyllysine; alternate is present on lysine 445. Residue lysine 445 is modified to N6-succinyllysine; alternate. Residue lysine 445 forms a Glycyl lysine isopeptide (Lys-Gly) (interchain with G-Cter in SUMO2); alternate linkage. Lysine 445 is covalently cross-linked (Glycyl lysine isopeptide (Lys-Gly) (interchain with G-Cter in SUMO1); alternate). Threonine 446 and threonine 458 each carry phosphothreonine. Serine 459 bears the Phosphoserine mark.

Belongs to the intermediate filament family. Homomer assembled from elementary dimers. Identified in complexes that contain VIM, EZR, AHNAK, BFSP1, BFSP2, ANK2, PLEC, PRX and spectrin. Interacts with BCAS3. Interacts with LGSN. Interacts with SYNM. Interacts (via rod region) with PLEC (via CH 1 domain). Interacts with STK33. Interacts with LARP6. Interacts with RAB8B. Interacts with TOR1A; the interaction associates TOR1A with the cytoskeleton. Interacts with TOR1AIP1. Interacts with TOR1AIP1. Interacts with DIAPH1. Interacts with EPPK1; interaction is dependent of higher-order structure of intermediate filament. Interacts with the non-receptor tyrosine kinase SRMS; the interaction leads to phosphorylation of VIM. Interacts with NOD2. Interacts (via head region) with CORO1C. Interacts with HDGF. Interacts with PRKCE (via phorbol-ester/DAG-type 2 domain). Interacts with BFSP2. Interacts with PPL. Interacts with PKP1 and PKP2. Interacts with SCRIB (via PDZ domains); the interaction protects SCRIB from proteasomal degradation and facilitates SCRIB localization to intermediate filaments, the interaction is reduced by cell contact inhibition. Post-translationally, one of the most prominent phosphoproteins in various cells of mesenchymal origin. Phosphorylation is enhanced during cell division, at which time vimentin filaments are significantly reorganized. Phosphorylation by PKN1 inhibits the formation of filaments. Filament disassembly during mitosis is promoted by phosphorylation at Ser-55 as well as by nestin. Phosphorylated at Ser-56 by CDK5 during neutrophil secretion in the cytoplasm. Phosphorylated by STK33. Phosphorylated on tyrosine residues by SRMS. In terms of processing, S-nitrosylation is induced by interferon-gamma and oxidatively-modified low-densitity lipoprotein (LDL(ox)) possibly implicating the iNOS-S100A8/9 transnitrosylase complex.

The protein localises to the cytoplasm. It localises to the cytoskeleton. It is found in the nucleus matrix. Its subcellular location is the cell membrane. In terms of biological role, vimentins are class-III intermediate filaments found in various non-epithelial cells, especially mesenchymal cells. Vimentin is attached to the nucleus, endoplasmic reticulum, and mitochondria, either laterally or terminally. Plays a role in cell directional movement, orientation, cell sheet organization and Golgi complex polarization at the cell migration front. Protects SCRIB from proteasomal degradation and facilitates its localization to intermediate filaments in a cell contact-mediated manner. Involved with LARP6 in the stabilization of type I collagen mRNAs for CO1A1 and CO1A2. The sequence is that of Vimentin from Rattus norvegicus (Rat).